Here is a 419-residue protein sequence, read N- to C-terminus: MSFPKVIVVSTGSELTAGRSQDTNSSWIANELFGMGFTVSKFVVLPDDPVVILEELRTLTELSMRETSILLVMTGGLGPTEDDYTLEAVCRLKGVTTEESPVARQRIETFYKLRGRNFQEAMQTAIRQVFVPKGSIILNNSVGIAPGFITSLAENVHLGCMPGVPGEMTEMFREELAPWILKTYSSREQLYSGFRFIWWMSESQFQKEFISKEKAIADGKAIWGVAAKRGYIRASFQSDSRALVDDLLRKLDTFYGTKSTPDIFEELPRMLLEKKITIGTAESCTGGLIAKTFTDVPGSSAYFYGGIISYDNSVKTGILGVKRNTLDEFGAVSRETAKEMAEGALDALGVDYSISVTGIAGPGGGTPQKKVGLVYFGIGQKNEETEIHEHYFPFPRSSFREFAAHTGIYLLYDRLKRSA.

This sequence belongs to the CinA family.

This is CinA-like protein from Leptospira borgpetersenii serovar Hardjo-bovis (strain JB197).